Here is a 722-residue protein sequence, read N- to C-terminus: Polyribonucleotide nucleotidyltransferase (722 aa).

Mg(2+) is bound by residues Asp495 and Asp501. One can recognise a KH domain in the interval 561-620 (PRLYVMKINPEKIREVIGKGGETIRSITKDTGCEINIEEDGTITIASVSSEGAEAAKKRI). The S1 motif domain maps to 630–700 (GKVYEGTVVK…DRGRIRLSIK (71 aa)).

The protein belongs to the polyribonucleotide nucleotidyltransferase family. Requires Mg(2+) as cofactor.

It localises to the cytoplasm. The enzyme catalyses RNA(n+1) + phosphate = RNA(n) + a ribonucleoside 5'-diphosphate. Involved in mRNA degradation. Catalyzes the phosphorolysis of single-stranded polyribonucleotides processively in the 3'- to 5'-direction. The chain is Polyribonucleotide nucleotidyltransferase from Chromobacterium violaceum (strain ATCC 12472 / DSM 30191 / JCM 1249 / CCUG 213 / NBRC 12614 / NCIMB 9131 / NCTC 9757 / MK).